The primary structure comprises 1049 residues: RIMS-binding protein 2 (1049 aa).

The 68-residue stretch at 164–231 (GKVHLCVARY…PSNFVDFIQD (68 aa)) folds into the SH3 1 domain. Fibronectin type-III domains are found at residues 294 to 387 (VPYP…GKDV), 390 to 471 (APSQ…EKDE), and 486 to 587 (PPQD…VPPA). Disordered stretches follow at residues 580–664 (PDLL…VSTT), 694–714 (SAGP…EVKR), and 728–750 (LGQQ…GSDL). The span at 582 to 598 (LLVPPAPHPRTAPPPKP) shows a compositional bias: pro residues. The segment covering 603–616 (MDTKDLGPHVKVDE) has biased composition (basic and acidic residues). The span at 641 to 651 (GPGRRSPSPSR) shows a compositional bias: low complexity. A phosphoserine mark is found at Ser701 and Ser709. A compositionally biased stretch (basic and acidic residues) spans 735–746 (CHGDEYHTESSR). Phosphoserine is present on residues Ser832 and Ser839. A Phosphothreonine modification is found at Thr841. SH3 domains are found at residues 848–916 (LPAR…EIHA) and 952–1019 (VPTR…EVPD). The disordered stretch occupies residues 1024-1049 (HLSDAPPHYSHDPPMRTKAKRVSQPP). The span at 1040-1049 (TKAKRVSQPP) shows a compositional bias: basic residues.

The protein belongs to the RIMBP family. As to quaternary structure, interacts with CACNA1D and CACNA1B, and potentially with other Ca(2+) channel alpha-1 isoforms. Interacts with RIMS1 and RIMS2.

Its subcellular location is the cell membrane. It localises to the synapse. Its function is as follows. Plays a role in the synaptic transmission as bifunctional linker that interacts simultaneously with RIMS1, RIMS2, CACNA1D and CACNA1B. In Rattus norvegicus (Rat), this protein is RIMS-binding protein 2 (Rimbp2).